The following is a 230-amino-acid chain: L-aspartate/glutamate-specific racemase (230 aa).

Residues Met10, Gln52, and 83 to 85 (TNT) contribute to the substrate site. Thr83 functions as the Proton donor in the catalytic mechanism. Catalysis depends on Cys197, which acts as the Proton acceptor. 198-199 (TE) lines the substrate pocket.

This sequence belongs to the aspartate/glutamate racemases family. As to quaternary structure, homodimer.

The enzyme catalyses L-glutamate = D-glutamate. The catalysed reaction is L-aspartate = D-aspartate. Functionally, exhibits racemase activity for both L-glutamate and L-aspartate. The protein is L-aspartate/glutamate-specific racemase of Escherichia coli O157:H7.